We begin with the raw amino-acid sequence, 206 residues long: RNA pyrophosphohydrolase (206 aa).

One can recognise a Nudix hydrolase domain in the interval glycine 6 to arginine 149. Residues glycine 38 to glycine 59 carry the Nudix box motif. A disordered region spans residues methionine 175 to serine 206.

This sequence belongs to the Nudix hydrolase family. RppH subfamily. The cofactor is a divalent metal cation.

Accelerates the degradation of transcripts by removing pyrophosphate from the 5'-end of triphosphorylated RNA, leading to a more labile monophosphorylated state that can stimulate subsequent ribonuclease cleavage. This is RNA pyrophosphohydrolase from Stenotrophomonas maltophilia (strain K279a).